A 331-amino-acid chain; its full sequence is 2-isopropylmalate synthase (331 aa).

Residues 1–80 enclose the Pyruvate carboxyltransferase domain; it reads RDEVVRGRDV…YTRINTREIY (80 aa). The Mn(2+) site is built by H15, H17, and N51. The regulatory domain stretch occupies residues 205-331; it reads QLEHVQFFSG…PSIEEVHRGV (127 aa).

This sequence belongs to the alpha-IPM synthase/homocitrate synthase family. LeuA type 1 subfamily. In terms of assembly, homotetramer. It depends on Mn(2+) as a cofactor.

It is found in the cytoplasm. The enzyme catalyses 3-methyl-2-oxobutanoate + acetyl-CoA + H2O = (2S)-2-isopropylmalate + CoA + H(+). It participates in amino-acid biosynthesis; L-leucine biosynthesis; L-leucine from 3-methyl-2-oxobutanoate: step 1/4. Catalyzes the condensation of the acetyl group of acetyl-CoA with 3-methyl-2-oxobutanoate (2-oxoisovalerate) to form 3-carboxy-3-hydroxy-4-methylpentanoate (2-isopropylmalate). This is 2-isopropylmalate synthase from Thermus thermophilus.